A 31-amino-acid chain; its full sequence is MESVAYILVLTMALSVIFFAIAFREPPRIQK.

A helical membrane pass occupies residues 3–23 (SVAYILVLTMALSVIFFAIAF).

The protein belongs to the PsbT family. In terms of assembly, PSII is composed of 1 copy each of membrane proteins PsbA, PsbB, PsbC, PsbD, PsbE, PsbF, PsbH, PsbI, PsbJ, PsbK, PsbL, PsbM, PsbT, PsbX, PsbY, PsbZ, Psb30/Ycf12, peripheral proteins PsbO, CyanoQ (PsbQ), PsbU, PsbV and a large number of cofactors. It forms dimeric complexes.

Its subcellular location is the cellular thylakoid membrane. In terms of biological role, found at the monomer-monomer interface of the photosystem II (PS II) dimer, plays a role in assembly and dimerization of PSII. PSII is a light-driven water plastoquinone oxidoreductase, using light energy to abstract electrons from H(2)O, generating a proton gradient subsequently used for ATP formation. The sequence is that of Photosystem II reaction center protein T from Microcystis aeruginosa (strain NIES-843 / IAM M-2473).